Reading from the N-terminus, the 65-residue chain is uncharacterized protein (65 aa).

This is an uncharacterized protein from Invertebrate iridescent virus 6 (IIV-6).